Here is a 30-residue protein sequence, read N- to C-terminus: Alpha-conotoxin EIVA (30 aa).

3 disulfides stabilise this stretch: Cys2–Cys16, Cys3–Cys11, and Cys14–Cys24. Pro7, Pro13, Pro21, Pro22, and Pro27 each carry 4-hydroxyproline. At Gly30 the chain carries Glycine amide.

Expressed by the venom duct.

It localises to the secreted. Alpha-conotoxins act on postsynaptic membranes, they bind to the nicotinic acetylcholine receptors (nAChR) and thus inhibit them. This toxin binds with high affinity to both fetal (alpha-1-beta-1-epsilon-delta (CHRNA1-CHRNB1-CHRND-CHRNE) subunits) and adult (alpha-1/beta-1/gamma/delta subunits) mammalian muscle nicotinic acetylcholine receptors (nAChR). This is Alpha-conotoxin EIVA from Conus ermineus (Agate cone).